Consider the following 312-residue polypeptide: MSKIRVLSVDDSALMRQIMTEIINSHSDMEMVATAPDPLVARDLIKKFNPDVLTLDVEMPRMDGLDFLEKLMRLRPMPVVMVSSLTGKGSEVTLRALELGAIDFVTKPQLGIREGMLAYSEMIAEKVRTAAKASLAAHKPLSAPTTLKAGPLLSSEKLIAIGASTGGTEAIRHVLQPLPLSSPALLITQHMPPGFTRSFADRLNKLCQIGVKEAEDGERVLPGHAYIAPGDRHMELARSGANYQIKIHDGPVGMLAMRQAGAWTLAQNEASCVVFGMPREAINMGGVCEVVDLSQVSQQMLAKISAGQAIRI.

A Response regulatory domain is found at 5–122 (RVLSVDDSAL…REGMLAYSEM (118 aa)). The residue at position 56 (Asp-56) is a 4-aspartylphosphate. Residues 152–307 (LLSSEKLIAI…QQMLAKISAG (156 aa)) form the CheB-type methylesterase domain. Catalysis depends on residues Ser-164, His-190, and Asp-249.

Belongs to the CheB family. Phosphorylated by CheA. Phosphorylation of the N-terminal regulatory domain activates the methylesterase activity.

The protein localises to the cytoplasm. It catalyses the reaction [protein]-L-glutamate 5-O-methyl ester + H2O = L-glutamyl-[protein] + methanol + H(+). It carries out the reaction L-glutaminyl-[protein] + H2O = L-glutamyl-[protein] + NH4(+). Involved in chemotaxis. Part of a chemotaxis signal transduction system that modulates chemotaxis in response to various stimuli. Catalyzes the demethylation of specific methylglutamate residues introduced into the chemoreceptors (methyl-accepting chemotaxis proteins or MCP) by CheR. Also mediates the irreversible deamidation of specific glutamine residues to glutamic acid. This chain is Protein-glutamate methylesterase/protein-glutamine glutaminase, found in Shigella boydii serotype 4 (strain Sb227).